A 413-amino-acid chain; its full sequence is Peptidase T (413 aa).

Residue His81 participates in Zn(2+) binding. Asp83 is an active-site residue. Asp143 contacts Zn(2+). Glu178 serves as the catalytic Proton acceptor. Positions 179, 201, and 383 each coordinate Zn(2+).

Belongs to the peptidase M20B family. Requires Zn(2+) as cofactor.

It is found in the cytoplasm. The enzyme catalyses Release of the N-terminal residue from a tripeptide.. Its function is as follows. Cleaves the N-terminal amino acid of tripeptides. This is Peptidase T from Lactococcus lactis subsp. hordniae.